The sequence spans 368 residues: Somatostatin receptor type 5 (368 aa).

Residues 1-45 lie on the Extracellular side of the membrane; that stretch reads MEPLFPASPLTTWNTSSVVPSGSGDENGTLAGLGPSPGARAVVVP. Residues Asn14 and Asn27 are each glycosylated (N-linked (GlcNAc...) asparagine). A helical transmembrane segment spans residues 46–66; that stretch reads VLYLLVCAVGLGGNTLVIYVV. Residues 67–77 are Cytoplasmic-facing; sequence LRHAKMKTVTN. Residues 78 to 98 traverse the membrane as a helical segment; the sequence is IYILNLAVADVLLMLGLPFVA. Over 99-115 the chain is Extracellular; that stretch reads TQNAISYWPFGPVLCRL. An intrachain disulfide couples Cys113 to Cys188. Residues 116 to 136 form a helical membrane-spanning segment; the sequence is VMTLDGINQFTSIFCLTVMSV. At 137 to 158 the chain is on the cytoplasmic side; sequence DRYLAVVHPIRSARWRRPRVAK. The helical transmembrane segment at 159-179 threads the bilayer; that stretch reads LASAAVWAFSLVMSLPLVVFA. The Extracellular portion of the chain corresponds to 180 to 207; the sequence is DIQEGWNTCNLSWPEPVGLWGAVFIIYT. Asn189 carries an N-linked (GlcNAc...) asparagine glycan. Residues 208–228 traverse the membrane as a helical segment; the sequence is SVLGFFGPLLVICLCYLLIVV. At 229–251 the chain is on the cytoplasmic side; the sequence is KLKASGVRVGSTRRRSERKVTRM. Residues 252–272 form a helical membrane-spanning segment; it reads VVVVVLVFAGCWLPFFIVNIV. Over 273 to 286 the chain is Extracellular; sequence NLAFALPEEPASAG. Residues 287 to 309 traverse the membrane as a helical segment; it reads AYFFVVVLSYANSCANPLLYGFL. Residues 310 to 368 lie on the Cytoplasmic side of the membrane; that stretch reads SDNFRQSFRKVLCLRKGYGAGAEDADATEPQPGPSSRLQEAMMPVRSCKANGLMQTSKL. A lipid anchor (S-palmitoyl cysteine; by ZDHHC5) is attached at Cys322.

Belongs to the G-protein coupled receptor 1 family. In terms of assembly, heterodimer with SSTR2. Heterodimerization with SSTR2 increases cell growth inhibition activity of SSTR2. Palmitoylated by ZDHHC5, but not ZDHHC3, nor ZDHHC8. Palmitoylation creates an additional intracellular loop which is thought to be important for efficient coupling to G-proteins and may target the protein to lipid rafts.

It is found in the cell membrane. Receptor for somatostatin 28 and to a lesser extent for somatostatin-14. The activity of this receptor is mediated by G proteins which inhibit adenylyl cyclase. Increases cell growth inhibition activity of SSTR2 following heterodimerization. This chain is Somatostatin receptor type 5 (SSTR5), found in Bos taurus (Bovine).